A 160-amino-acid polypeptide reads, in one-letter code: Small ribosomal subunit protein uS7 (160 aa).

The protein belongs to the universal ribosomal protein uS7 family. In terms of assembly, part of the 30S ribosomal subunit. Contacts proteins S9 and S11.

One of the primary rRNA binding proteins, it binds directly to 16S rRNA where it nucleates assembly of the head domain of the 30S subunit. Is located at the subunit interface close to the decoding center, probably blocks exit of the E-site tRNA. This chain is Small ribosomal subunit protein uS7, found in Anaplasma phagocytophilum (strain HZ).